The sequence spans 538 residues: Carboxypeptidase 2 (538 aa).

The first 21 residues, 1–21 (MVAYRFLTLISLGLGSHCASA), serve as a signal peptide directing secretion. N-linked (GlcNAc...) asparagine glycosylation occurs at Asn46. Positions 53-76 (PAFTSPGTVPRGFSDGTSGPTRDE) are disordered. Residues 71–351 (GPTRDETMEG…VMVKSILQTA (281 aa)) form the Peptidase M14 domain. Zn(2+) contacts are provided by His136, Glu139, and His224. Glu322 (proton donor/acceptor) is an active-site residue. N-linked (GlcNAc...) asparagine glycosylation is found at Asn393 and Asn459.

Belongs to the peptidase M14 family. Zn(2+) is required as a cofactor.

The protein localises to the secreted. Functionally, extracellular metalloprotease that contributes to pathogenicity. This chain is Carboxypeptidase 2 (MCPB), found in Trichophyton tonsurans (Scalp ringworm fungus).